The primary structure comprises 187 residues: Peptidyl-tRNA hydrolase (187 aa).

Position 14 (Y14) interacts with tRNA. H19 acts as the Proton acceptor in catalysis. Residues Y64, N66, and N112 each contribute to the tRNA site.

This sequence belongs to the PTH family. As to quaternary structure, monomer.

It localises to the cytoplasm. It carries out the reaction an N-acyl-L-alpha-aminoacyl-tRNA + H2O = an N-acyl-L-amino acid + a tRNA + H(+). Hydrolyzes ribosome-free peptidyl-tRNAs (with 1 or more amino acids incorporated), which drop off the ribosome during protein synthesis, or as a result of ribosome stalling. Its function is as follows. Catalyzes the release of premature peptidyl moieties from peptidyl-tRNA molecules trapped in stalled 50S ribosomal subunits, and thus maintains levels of free tRNAs and 50S ribosomes. This is Peptidyl-tRNA hydrolase from Clostridium acetobutylicum (strain ATCC 824 / DSM 792 / JCM 1419 / IAM 19013 / LMG 5710 / NBRC 13948 / NRRL B-527 / VKM B-1787 / 2291 / W).